A 386-amino-acid chain; its full sequence is Succinate--CoA ligase [ADP-forming] subunit beta (386 aa).

Positions 9–244 (KELLRDYGVP…LNEEDEKEIE (236 aa)) constitute an ATP-grasp domain. Residues Lys-46, 53–55 (GRG), Glu-99, Cys-102, and Glu-107 each bind ATP. Asn-199 and Asp-213 together coordinate Mg(2+). Residues Asn-264 and 321 to 323 (GIM) each bind substrate.

This sequence belongs to the succinate/malate CoA ligase beta subunit family. In terms of assembly, heterotetramer of two alpha and two beta subunits. It depends on Mg(2+) as a cofactor.

The enzyme catalyses succinate + ATP + CoA = succinyl-CoA + ADP + phosphate. The catalysed reaction is GTP + succinate + CoA = succinyl-CoA + GDP + phosphate. The protein operates within carbohydrate metabolism; tricarboxylic acid cycle; succinate from succinyl-CoA (ligase route): step 1/1. Its function is as follows. Succinyl-CoA synthetase functions in the citric acid cycle (TCA), coupling the hydrolysis of succinyl-CoA to the synthesis of either ATP or GTP and thus represents the only step of substrate-level phosphorylation in the TCA. The beta subunit provides nucleotide specificity of the enzyme and binds the substrate succinate, while the binding sites for coenzyme A and phosphate are found in the alpha subunit. In Alkaliphilus oremlandii (strain OhILAs) (Clostridium oremlandii (strain OhILAs)), this protein is Succinate--CoA ligase [ADP-forming] subunit beta.